The primary structure comprises 394 residues: Elongation factor Tu 2 (394 aa).

Positions 9 to 204 (KPHCNIGTIG…SIDDYIPQPT (196 aa)) constitute a tr-type G domain. The interval 18 to 25 (GHVDHGKT) is G1. 18–25 (GHVDHGKT) is a binding site for GTP. Mg(2+) is bound at residue Thr25. The tract at residues 61 to 65 (GITIQ) is G2. The tract at residues 82 to 85 (DCPG) is G3. GTP-binding positions include 82–86 (DCPGH) and 137–140 (NKID). Positions 137–140 (NKID) are G4. The segment at 174–176 (SAL) is G5.

Belongs to the TRAFAC class translation factor GTPase superfamily. Classic translation factor GTPase family. EF-Tu/EF-1A subfamily. Monomer.

Its subcellular location is the cytoplasm. The catalysed reaction is GTP + H2O = GDP + phosphate + H(+). GTP hydrolase that promotes the GTP-dependent binding of aminoacyl-tRNA to the A-site of ribosomes during protein biosynthesis. The polypeptide is Elongation factor Tu 2 (Orientia tsutsugamushi (strain Boryong) (Rickettsia tsutsugamushi)).